The sequence spans 261 residues: Carbonic anhydrase 1 (261 aa).

A disordered region spans residues 1-31; sequence MASPDWGYDDKNGPEQWSKLYPIANGNNQSP. Ala2 bears the N-acetylalanine mark. The Alpha-carbonic anhydrase domain maps to 4 to 261; that stretch reads PDWGYDDKNG…LKGRTVRASF (258 aa). The active-site Proton donor/acceptor is His65. Zn(2+) is bound by residues His65, His68, His95, His97, and His120. Residues Thr200 and 200–201 contribute to the substrate site; that span reads TH. His201 is a binding site for Zn(2+). A disordered region spans residues 241 to 261; the sequence is PMQHNNRPTQPLKGRTVRASF.

It belongs to the alpha-carbonic anhydrase family. Zn(2+) is required as a cofactor.

Its subcellular location is the cytoplasm. It carries out the reaction hydrogencarbonate + H(+) = CO2 + H2O. The catalysed reaction is urea = cyanamide + H2O. Activated by histamine, imidazole, L-adrenaline, L- and D-histidine, and L- and D-phenylalanine. Inhibited by coumarins, sulfonamide derivatives such as acetazolamide, benzenesulfonamide and derivatives (4-carboxyethylbenzene-sulfonamide, 4-carboxyethylbenzene-sulfonamide ethyl ester, 4-(acetyl-2-aminoethyl)benzene-sulfonamide, 4-aminoethylbenzene-sulfonamide), and 'prong inhibitors' BR15, BR17, BR22 and BR30. Activated by a short exposition to Foscarnet (phosphonoformate trisodium salt), but inhibited by a long one. Esterase activity weakly reduced by cyanamide. Catalyzes the reversible hydration of carbon dioxide. Can hydrate cyanamide to urea. The polypeptide is Carbonic anhydrase 1 (CA1) (Homo sapiens (Human)).